The sequence spans 343 residues: ATP phosphoribosyltransferase regulatory subunit (343 aa).

A disordered region spans residues 324-343; sequence RANGRAKRPARPRRSPPRPR. A compositionally biased stretch (basic residues) spans 327–343; it reads GRAKRPARPRRSPPRPR.

The protein belongs to the class-II aminoacyl-tRNA synthetase family. HisZ subfamily. As to quaternary structure, heteromultimer composed of HisG and HisZ subunits.

It localises to the cytoplasm. It participates in amino-acid biosynthesis; L-histidine biosynthesis; L-histidine from 5-phospho-alpha-D-ribose 1-diphosphate: step 1/9. Required for the first step of histidine biosynthesis. May allow the feedback regulation of ATP phosphoribosyltransferase activity by histidine. The sequence is that of ATP phosphoribosyltransferase regulatory subunit from Anaeromyxobacter sp. (strain Fw109-5).